Here is a 640-residue protein sequence, read N- to C-terminus: Threonine--tRNA ligase (640 aa).

The 61-residue stretch at methionine 1–threonine 61 folds into the TGS domain. Residues aspartate 242–proline 533 are catalytic. Cysteine 333, histidine 384, and histidine 510 together coordinate Zn(2+).

This sequence belongs to the class-II aminoacyl-tRNA synthetase family. In terms of assembly, homodimer. Zn(2+) serves as cofactor.

The protein resides in the cytoplasm. It carries out the reaction tRNA(Thr) + L-threonine + ATP = L-threonyl-tRNA(Thr) + AMP + diphosphate + H(+). In terms of biological role, catalyzes the attachment of threonine to tRNA(Thr) in a two-step reaction: L-threonine is first activated by ATP to form Thr-AMP and then transferred to the acceptor end of tRNA(Thr). Also edits incorrectly charged L-seryl-tRNA(Thr). This is Threonine--tRNA ligase from Pseudomonas putida (strain GB-1).